A 167-amino-acid chain; its full sequence is Modulator of smoothened protein (167 aa).

Helical transmembrane passes span 7 to 29, 68 to 88, 101 to 121, and 139 to 159; these read ISGC…PDWI, TLFF…LLVI, WIAF…PVGF, and VGSS…GLLF.

Its subcellular location is the cell projection. It is found in the cilium membrane. The protein localises to the cell membrane. Acts as a negative regulator of hedgehog signaling probably by promoting internalization and subsequent degradation of smoothened protein (SMO) present in the ciliary membrane. Plays a role in sonic hedgehog (SHH)-induced spinal neural progenitor cells differentiation. This chain is Modulator of smoothened protein, found in Danio rerio (Zebrafish).